The following is a 267-amino-acid chain: WUSCHEL-related homeobox 8 (267 aa).

The segment at residues Thr88–Gln152 is a DNA-binding region (homeobox; WUS-type). The segment at Ser148 to Arg195 is disordered. The segment covering Pro171–Arg195 has biased composition (basic and acidic residues).

It belongs to the WUS homeobox family.

It is found in the nucleus. Functionally, transcription factor which may be involved in developmental processes. In Oryza sativa subsp. japonica (Rice), this protein is WUSCHEL-related homeobox 8 (WOX8).